A 739-amino-acid polypeptide reads, in one-letter code: Glycine--tRNA ligase (739 aa).

The N-terminal 36 residues, 1-36 (MPSPRPVLLRGARAALLLLLPPRLLARPSLLLRRSL), are a transit peptide targeting the mitochondrion. Residue S35 is modified to Phosphoserine. Positions 63–119 (VLAPLRLAVRQQGDLVRKLKEDKAPQVDVDKAVAELKARKRVLEAKELALQPKDDIV) constitute a WHEP-TRS domain. K204 is modified (N6-acetyllysine). E299 serves as a coordination point for glycine. Residues 331–333 (RNE) and 342–343 (RV) each bind ATP. Residue E350 participates in glycine binding. Y453 is subject to Phosphotyrosine. 457–458 (EI) serves as a coordination point for ATP. At K501 the chain carries N6-acetyllysine. 576–578 (EPS) is a glycine binding site. R583 contributes to the ATP binding site. S700 is subject to Phosphoserine. The residue at position 736 (T736) is a Phosphothreonine.

This sequence belongs to the class-II aminoacyl-tRNA synthetase family. As to quaternary structure, homodimer. Widely expressed, including in brain and spinal cord. In terms of tissue distribution, expressed in brain, spinal cord, muscle, heart and spleen. As to expression, expressed in brain, spinal cord, muscle, heart, spleen and liver.

Its subcellular location is the cytoplasm. The protein resides in the cell projection. The protein localises to the axon. It is found in the secreted. It localises to the extracellular exosome. Its subcellular location is the mitochondrion. The catalysed reaction is tRNA(Gly) + glycine + ATP = glycyl-tRNA(Gly) + AMP + diphosphate. It carries out the reaction 2 ATP + H(+) = P(1),P(4)-bis(5'-adenosyl) tetraphosphate + diphosphate. With respect to regulation, ap4A synthesis is inhibited by tRNA, via the disruption of the second ATP-binding site by direct blocking and/or by tRNA-induced conformational change. Its function is as follows. Catalyzes the ATP-dependent ligation of glycine to the 3'-end of its cognate tRNA, via the formation of an aminoacyl-adenylate intermediate (Gly-AMP). Also produces diadenosine tetraphosphate (Ap4A), a universal pleiotropic signaling molecule needed for cell regulation pathways, by direct condensation of 2 ATPs. Thereby, may play a special role in Ap4A homeostasis. This Homo sapiens (Human) protein is Glycine--tRNA ligase.